A 1143-amino-acid polypeptide reads, in one-letter code: FH2 domain-containing protein 1 (1143 aa).

The interval 16–89 is disordered; that stretch reads GNIATAPGFM…PPTTHMNGYS (74 aa). Pro residues-rich tracts occupy residues 29–46 and 56–80; these read TPPP…PSPP and SSPP…PGLP. The FH2 domain maps to 87–482; it reads GYSHLGKKKR…QLQRLKEQEQ (396 aa). Serine 500 is modified (phosphoserine). The interval 517–638 is disordered; sequence PFLHPRPISP…NHASAFPRAR (122 aa). The segment covering 521–534 has biased composition (low complexity); it reads PRPISPSSPSYRPP. 3 positions are modified to phosphoserine: serine 650, serine 660, and serine 664. The interval 706–1143 is disordered; sequence LESVGHRGPQ…LGRILNPLRK (438 aa). A compositionally biased stretch (low complexity) spans 806-818; sequence GSMSSGVGEMGDS. Basic and acidic residues predominate over residues 848–861; the sequence is LPRDKPTKRKDVVA. Polar residues predominate over residues 925–947; it reads RGPSQNPPSSTDTVWSRQNSVRR. The span at 958–968 shows a compositional bias: low complexity; that stretch reads PRGSSGSSSTR. The tract at residues 960 to 1086 is MTBD; microtubule-binding domain; sequence GSSGSSSTRP…DAAPKDSSTL (127 aa). Over residues 995 to 1018 the composition is skewed to basic and acidic residues; that stretch reads QKPEENKTCRAHSEGPESPKEEPK. Over residues 1036–1046 the composition is skewed to polar residues; sequence ARNTVASSSRS. 2 stretches are compositionally biased toward basic and acidic residues: residues 1071–1080 and 1117–1130; these read VKGDPEDAAP and GAGE…KDSS.

In terms of assembly, interacts with CEP170.

It is found in the cell projection. Its subcellular location is the cilium. The protein resides in the golgi apparatus. In terms of biological role, microtubule-associated formin which regulates both actin and microtubule dynamics. Induces microtubule acetylation and stabilization and actin stress fiber formation. Regulates Golgi ribbon formation. Required for normal cilia assembly. Early in cilia assembly, may assist in the maturation and positioning of the centrosome/basal body, and once cilia assembly has initiated, may also promote cilia elongation by inhibiting disassembly. This is FH2 domain-containing protein 1 (FHDC1) from Homo sapiens (Human).